Reading from the N-terminus, the 189-residue chain is Peptidyl-tRNA hydrolase (189 aa).

Tyr15 provides a ligand contact to tRNA. The active-site Proton acceptor is His20. Positions 66, 68, and 114 each coordinate tRNA.

Belongs to the PTH family. In terms of assembly, monomer.

The protein resides in the cytoplasm. The enzyme catalyses an N-acyl-L-alpha-aminoacyl-tRNA + H2O = an N-acyl-L-amino acid + a tRNA + H(+). Hydrolyzes ribosome-free peptidyl-tRNAs (with 1 or more amino acids incorporated), which drop off the ribosome during protein synthesis, or as a result of ribosome stalling. In terms of biological role, catalyzes the release of premature peptidyl moieties from peptidyl-tRNA molecules trapped in stalled 50S ribosomal subunits, and thus maintains levels of free tRNAs and 50S ribosomes. This chain is Peptidyl-tRNA hydrolase, found in Streptococcus mutans serotype c (strain ATCC 700610 / UA159).